The sequence spans 155 residues: Anaerobic ribonucleoside-triphosphate reductase-activating protein (155 aa).

Positions 26, 30, and 33 each coordinate [4Fe-4S] cluster. Residues 32-34 (GCY) and Gly74 each bind S-adenosyl-L-methionine.

Belongs to the organic radical-activating enzymes family. In terms of assembly, forms a tetramer composed of two NrdD and two NrdG subunits. Requires [4Fe-4S] cluster as cofactor.

Its subcellular location is the cytoplasm. The catalysed reaction is glycyl-[protein] + reduced [flavodoxin] + S-adenosyl-L-methionine = glycin-2-yl radical-[protein] + semiquinone [flavodoxin] + 5'-deoxyadenosine + L-methionine + H(+). Functionally, activation of anaerobic ribonucleoside-triphosphate reductase under anaerobic conditions by generation of an organic free radical, using S-adenosylmethionine and reduced flavodoxin as cosubstrates to produce 5'-deoxy-adenosine. This Haemophilus influenzae (strain ATCC 51907 / DSM 11121 / KW20 / Rd) protein is Anaerobic ribonucleoside-triphosphate reductase-activating protein (nrdG).